The primary structure comprises 873 residues: Cilia- and flagella-associated protein 58 (873 aa).

Coiled-coil stretches lie at residues 106-609 (VDSA…VISE) and 642-832 (ETQY…QKRK). Positions 202–221 (QEIQHRQNEASRESRKKEKL) are disordered. Residues 204 to 221 (IQHRQNEASRESRKKEKL) show a composition bias toward basic and acidic residues.

The protein belongs to the CFAP58 family. As to quaternary structure, interacts with ODFP2. As to expression, predominantly expressed in the testis. Also found at lower levels in ciliated cells and tissues such as neural progenitor cells and oviducts.

Its subcellular location is the cell projection. It localises to the cilium. It is found in the flagellum. The protein resides in the cytoplasm. The protein localises to the cytoskeleton. Its subcellular location is the microtubule organizing center. It localises to the centrosome. Its function is as follows. Has an essential role in the assembly and organization of the sperm flagellar axoneme. Required for the elongation of the primary cilium and sperm flagellar midpiece via modulation of the Notch signaling pathway. In Mus musculus (Mouse), this protein is Cilia- and flagella-associated protein 58.